Here is a 263-residue protein sequence, read N- to C-terminus: MNQIDRLLTIMQRLRDPENGCPWDKEQTFATIAPYTLEETYEVLDAIAREDFDDLRGELGDLLFQVVFYAQMAQEEGRFDFNDICAAISDKLERRHPHVFADSSAENSSEVLARWEQIKTEERAQKAQHSALDDIPRSLPALMRAQKIQKRCANVGFDWTTLGPVVDKVYEEIDEVMYEARQAVVDQAKLEEEMGDLLFATVNLARHLGTKAEIALQKANEKFERRFREVERIVAARGLEMTGVDLETMEEVWQQVKRQEIDL.

ATP contacts are provided by residues Lys-168–Glu-172, Glu-175, and Lys-189–Glu-192. Residues Glu-172 and Glu-175 each coordinate Mg(2+). Mg(2+) contacts are provided by Glu-193 and Asp-196. ATP is bound by residues Asp-196, Lys-222–Arg-226, and Trp-253.

This sequence belongs to the nucleoside triphosphate pyrophosphohydrolase family. As to quaternary structure, homodimer. It depends on Mg(2+) as a cofactor.

It catalyses the reaction ATP + H2O = AMP + diphosphate + H(+). In terms of biological role, involved in the regulation of bacterial cell survival under conditions of nutritional stress. Regulates the MazE-MazF toxin-antitoxin (TA) system that mediates programmed cell death (PCD). This is achieved by lowering the cellular concentration of (p)ppGpp produced by RelA under amino acid starvation, thus protecting the cell from the toxicity of MazF. Reduction of (p)ppGpp can be achieved by direct degradation of (p)ppGpp or by degradation of NTPs, which are substrates for (p)ppGpp synthesis by RelA. The sequence is that of Nucleoside triphosphate pyrophosphohydrolase (mazG) from Escherichia coli O157:H7.